We begin with the raw amino-acid sequence, 973 residues long: Serine/threonine-protein kinase atg1 (973 aa).

A Protein kinase domain is found at 23–328 (YTRLDEIGRG…FPDFFQNGVI (306 aa)). ATP is bound by residues 29 to 37 (IGRGSFATV) and lysine 52. The active-site Proton acceptor is aspartate 166. Disordered regions lie at residues 338 to 446 (DDLP…PGRQ), 460 to 482 (RQKG…DKLR), 523 to 587 (GNIS…QSPT), and 949 to 973 (PTPS…TPPK). A compositionally biased stretch (polar residues) spans 387–407 (GLTQRPPSQNQRFGTPQTTTP). Residues 523–537 (GNISRGAQTGALSRR) are compositionally biased toward polar residues. A compositionally biased stretch (basic and acidic residues) spans 566-582 (SRADSMHNRQGSYERRY). Residues 951–965 (PSANVPSKMASSNPV) show a composition bias toward polar residues.

Belongs to the protein kinase superfamily. Ser/Thr protein kinase family. APG1/unc-51/ULK1 subfamily. As to quaternary structure, homodimer. Forms a ternary complex with ATG13 and ATG17.

It is found in the cytoplasm. It localises to the preautophagosomal structure membrane. The enzyme catalyses L-seryl-[protein] + ATP = O-phospho-L-seryl-[protein] + ADP + H(+). It catalyses the reaction L-threonyl-[protein] + ATP = O-phospho-L-threonyl-[protein] + ADP + H(+). Functionally, serine/threonine protein kinase involved in the cytoplasm to vacuole transport (Cvt) and found to be essential in autophagy, where it is required for the formation of autophagosomes. Involved in the clearance of protein aggregates which cannot be efficiently cleared by the proteasome. Required for selective autophagic degradation of the nucleus (nucleophagy) as well as for mitophagy which contributes to regulate mitochondrial quantity and quality by eliminating the mitochondria to a basal level to fulfill cellular energy requirements and preventing excess ROS production. Also involved in endoplasmic reticulum-specific autophagic process, in selective removal of ER-associated degradation (ERAD) substrates. Plays a key role in ATG9 and ATG23 cycling through the pre-autophagosomal structure and is necessary to promote ATG18 binding to ATG9 through phosphorylation of ATG9. Catalyzes phosphorylation of ATG4, decreasing the interaction between ATG4 and ATG8 and impairing deconjugation of PE-conjugated forms of ATG8. This is Serine/threonine-protein kinase atg1 from Aspergillus fumigatus (strain ATCC MYA-4609 / CBS 101355 / FGSC A1100 / Af293) (Neosartorya fumigata).